Consider the following 347-residue polypeptide: Endothelin receptor type B (347 aa).

Residues 1 to 7 lie on the Extracellular side of the membrane; the sequence is EIKETFK. A helical transmembrane segment spans residues 8–32; it reads YINTVVSCLVFVLGIIGNSTLLRII. Topologically, residues 33 to 43 are cytoplasmic; that stretch reads YKNKCMRNGPN. A helical transmembrane segment spans residues 44–69; the sequence is ILIASLALGDLLHIIIDIPISVYKLL. Over 70-81 the chain is Extracellular; the sequence is AEDWPFGVEMCK. Cysteine 80 and cysteine 161 are joined by a disulfide. The chain crosses the membrane as a helical span at residues 82–103; sequence LVPFIQKASVGITVLSLCALSI. Residues 104–124 are Cytoplasmic-facing; the sequence is DRYRAVASWSRIKGIGVPKWT. Residues 125 to 149 traverse the membrane as a helical segment; sequence AVEIVLIWVISVVLAVPEAIAFDMI. At 150–177 the chain is on the extracellular side; it reads TMEYRGKDLRICLLHPTQKTSFMMFYKQ. The helical transmembrane segment at 178-202 threads the bilayer; it reads AKDWWLFSFYFCLPLAITALFYTLM. The Cytoplasmic segment spans residues 203–230; the sequence is TCEMLRKKSGMQIALNDHLKQRREVAKT. Residues 231 to 256 traverse the membrane as a helical segment; that stretch reads VFCLVLVFALCWLPLHLSRILKLTIY. The Extracellular segment spans residues 257 to 268; sequence DQKDPNRCELLS. Residues 269–295 traverse the membrane as a helical segment; sequence FFLVMDYIGINMASLNSCINPIALYLV. Residues 296 to 347 lie on the Cytoplasmic side of the membrane; that stretch reads SKRFQNCFKSCLCCWCQSKDLLSLEERQSCLKFKANDHGYDNFRSSNKYSSS. Residues cysteine 309 and cysteine 311 are each lipidated (S-palmitoyl cysteine).

The protein belongs to the G-protein coupled receptor 1 family. Endothelin receptor subfamily. EDNRB sub-subfamily.

It is found in the cell membrane. Its function is as follows. Non-specific receptor for endothelin 1, 2, and 3. Mediates its action by association with G proteins that activate a phosphatidylinositol-calcium second messenger system. The polypeptide is Endothelin receptor type B (EDNRB) (Coturnix japonica (Japanese quail)).